Here is a 125-residue protein sequence, read N- to C-terminus: UPF0231 protein APL_0968 (125 aa).

It belongs to the UPF0231 family.

The polypeptide is UPF0231 protein APL_0968 (Actinobacillus pleuropneumoniae serotype 5b (strain L20)).